We begin with the raw amino-acid sequence, 120 residues long: C-C motif chemokine 2 (120 aa).

Positions 1–23 (MQRSSVLLCLLVIEATFCSLLMA) are cleaved as a signal peptide. Glutamine 24 is subject to Pyrrolidone carboxylic acid. Intrachain disulfides connect cysteine 33–cysteine 57 and cysteine 34–cysteine 73. The disordered stretch occupies residues 91–120 (RTQQKQNSTAPQTSKPLNIRFTTQDPKNRS). Residues 93 to 120 (QQKQNSTAPQTSKPLNIRFTTQDPKNRS) show a composition bias toward polar residues. N-linked (GlcNAc...) asparagine glycosylation is present at asparagine 97.

This sequence belongs to the intercrine beta (chemokine CC) family. In terms of assembly, monomer or homodimer; in equilibrium. Is tethered on endothelial cells by glycosaminoglycan (GAG) side chains of proteoglycans. Interacts with TNFAIP6 (via Link domain). Post-translationally, processing at the N-terminus can regulate receptor and target cell selectivity. Deletion of the N-terminal residue converts it from an activator of basophil to an eosinophil chemoattractant. In terms of processing, N-Glycosylated.

The protein resides in the secreted. Functionally, acts as a ligand for C-C chemokine receptor CCR2. Signals through binding and activation of CCR2 and induces a strong chemotactic response and mobilization of intracellular calcium ions. Exhibits a chemotactic activity for monocytes and basophils but not neutrophils or eosinophils. Plays an important role in mediating peripheral nerve injury-induced neuropathic pain. Increases NMDA-mediated synaptic transmission in both dopamine D1 and D2 receptor-containing neurons, which may be caused by MAPK/ERK-dependent phosphorylation of GRIN2B/NMDAR2B. This chain is C-C motif chemokine 2 (CCL2), found in Cavia porcellus (Guinea pig).